Consider the following 313-residue polypeptide: Porphobilinogen deaminase (313 aa).

The residue at position 242 (C242) is an S-(dipyrrolylmethanemethyl)cysteine.

The protein belongs to the HMBS family. In terms of assembly, monomer. The cofactor is dipyrromethane.

It carries out the reaction 4 porphobilinogen + H2O = hydroxymethylbilane + 4 NH4(+). It functions in the pathway porphyrin-containing compound metabolism; protoporphyrin-IX biosynthesis; coproporphyrinogen-III from 5-aminolevulinate: step 2/4. In terms of biological role, tetrapolymerization of the monopyrrole PBG into the hydroxymethylbilane pre-uroporphyrinogen in several discrete steps. In Pseudomonas aeruginosa (strain UCBPP-PA14), this protein is Porphobilinogen deaminase.